Reading from the N-terminus, the 338-residue chain is Photosystem II assembly lipoprotein Ycf48 (338 aa).

Residues 1-23 (MKRLFSNVINLTLVLIVGVALSG) form the signal peptide. C24 is lipidated: N-palmitoyl cysteine. The S-diacylglycerol cysteine moiety is linked to residue C24.

It belongs to the Ycf48 family. Part of early PSII assembly complexes which includes D1 (psbA) and PsbI; not found in mature PSII. Binds to the lumenal side of PSII complexes. Interacts with YidC.

The protein localises to the cellular thylakoid membrane. In terms of biological role, a factor required for optimal assembly of photosystem II (PSII), acting in the early stages of PSII assembly. Also plays a role in replacement of photodamaged D1 (psbA). Assists YidC in synthesis of chlorophyll-binding proteins. This Prochlorococcus marinus (strain NATL2A) protein is Photosystem II assembly lipoprotein Ycf48.